The following is a 315-amino-acid chain: MTTEPLFFKPVFKERIWGGTALADFGYTIPSQRTGECWAFAAHQNGQSVVQNGMYKGFTLSELWEHHRHLFGQLEGDRFPLLTKILDADQDLSVQVHPNDEYANIHENGELGKTECWYIIDCQKDAEIIYGHNATTKEELTTMIERGEWDELLRRVKVKPGDFFYVPSGTVHAIGKGILALETQQNSDTTYRLYDYDRKDAEGKLRELHLKKSIEVIEVPSIPERHTVHHEQIEDLLTTTLIECAYFSVGKWNLSGSASLKQQKPFLLISVIEGEGRMISGEYVYPFKKGDHMLLPYGLGEFKLEGYAECIVSHL.

Zn(2+)-binding residues include H97, E115, and H172. R192 is a catalytic residue.

Belongs to the mannose-6-phosphate isomerase type 1 family. Zn(2+) serves as cofactor.

The catalysed reaction is D-mannose 6-phosphate = D-fructose 6-phosphate. The protein is Mannose-6-phosphate isomerase ManA (manA) of Bacillus subtilis (strain 168).